The sequence spans 594 residues: Arginine--tRNA ligase (594 aa).

The 'HIGH' region signature appears at 139-149 (ANPTGPLHVGH).

The protein belongs to the class-I aminoacyl-tRNA synthetase family. In terms of assembly, monomer.

It localises to the cytoplasm. It carries out the reaction tRNA(Arg) + L-arginine + ATP = L-arginyl-tRNA(Arg) + AMP + diphosphate. The chain is Arginine--tRNA ligase from Burkholderia pseudomallei (strain 1106a).